We begin with the raw amino-acid sequence, 638 residues long: tRNA uridine 5-carboxymethylaminomethyl modification enzyme MnmG (638 aa).

FAD-binding positions include 13-18 (GGGHAG), Val125, and Ser180. Position 273–287 (273–287 (GPRYCPSIEDKIHRF)) interacts with NAD(+). Gln370 provides a ligand contact to FAD.

Belongs to the MnmG family. Homodimer. Heterotetramer of two MnmE and two MnmG subunits. FAD is required as a cofactor.

The protein resides in the cytoplasm. NAD-binding protein involved in the addition of a carboxymethylaminomethyl (cmnm) group at the wobble position (U34) of certain tRNAs, forming tRNA-cmnm(5)s(2)U34. This Cellvibrio japonicus (strain Ueda107) (Pseudomonas fluorescens subsp. cellulosa) protein is tRNA uridine 5-carboxymethylaminomethyl modification enzyme MnmG.